Here is a 63-residue protein sequence, read N- to C-terminus: Large ribosomal subunit protein uL30 (63 aa).

It belongs to the universal ribosomal protein uL30 family. In terms of assembly, part of the 50S ribosomal subunit.

The chain is Large ribosomal subunit protein uL30 from Rickettsia peacockii (strain Rustic).